The chain runs to 598 residues: Elongation factor 4 (598 aa).

A tr-type G domain is found at 4–186 (KHIRNFSIIA…VIVRQIPPPE (183 aa)). GTP is bound by residues 16-21 (DHGKST) and 133-136 (NKID).

This sequence belongs to the TRAFAC class translation factor GTPase superfamily. Classic translation factor GTPase family. LepA subfamily.

It is found in the cell inner membrane. The catalysed reaction is GTP + H2O = GDP + phosphate + H(+). Required for accurate and efficient protein synthesis under certain stress conditions. May act as a fidelity factor of the translation reaction, by catalyzing a one-codon backward translocation of tRNAs on improperly translocated ribosomes. Back-translocation proceeds from a post-translocation (POST) complex to a pre-translocation (PRE) complex, thus giving elongation factor G a second chance to translocate the tRNAs correctly. Binds to ribosomes in a GTP-dependent manner. In Pseudoalteromonas atlantica (strain T6c / ATCC BAA-1087), this protein is Elongation factor 4.